The sequence spans 381 residues: Dual specificity protein phosphatase 6 (381 aa).

One can recognise a Rhodanese domain in the interval 30 to 148 (GNERLLLMDC…FQAEFSLHCE (119 aa)). Residues 176 to 203 (SSSDIESDLDRDPNSATDSDGSPLSNSQ) form a disordered region. Positions 189–203 (NSATDSDGSPLSNSQ) are enriched in polar residues. One can recognise a Tyrosine-protein phosphatase domain in the interval 206–349 (FPVEILPFLY…LLDFERTLGL (144 aa)). The active-site Phosphocysteine intermediate is the Cys-293.

This sequence belongs to the protein-tyrosine phosphatase family. Non-receptor class dual specificity subfamily. As to quaternary structure, interacts with MAPK1/ERK2. Post-translationally, ubiquitinated by the SCF(FBXO31) complex, leading to its proteasomal degradation. In terms of tissue distribution, expressed in keratinocytes (at protein level).

The protein localises to the cytoplasm. The catalysed reaction is O-phospho-L-tyrosyl-[protein] + H2O = L-tyrosyl-[protein] + phosphate. It carries out the reaction O-phospho-L-seryl-[protein] + H2O = L-seryl-[protein] + phosphate. The enzyme catalyses O-phospho-L-threonyl-[protein] + H2O = L-threonyl-[protein] + phosphate. In terms of biological role, dual specificity protein phosphatase, which mediates dephosphorylation and inactivation of MAP kinases. Has a specificity for the ERK family. Plays an important role in alleviating chronic postoperative pain. Necessary for the normal dephosphorylation of the long-lasting phosphorylated forms of spinal MAPK1/3 and MAP kinase p38 induced by peripheral surgery, which drives the resolution of acute postoperative allodynia. Also important for dephosphorylation of MAPK1/3 in local wound tissue, which further contributes to resolution of acute pain. Promotes cell differentiation by regulating MAPK1/MAPK3 activity and regulating the expression of AP1 transcription factors. This chain is Dual specificity protein phosphatase 6 (DUSP6), found in Homo sapiens (Human).